Reading from the N-terminus, the 238-residue chain is Small ribosomal subunit protein eS4 (238 aa).

The region spanning 38–110 (LPLAIIIRDV…EKKYYALIPI (73 aa)) is the S4 RNA-binding domain.

It belongs to the eukaryotic ribosomal protein eS4 family.

This Pyrobaculum islandicum (strain DSM 4184 / JCM 9189 / GEO3) protein is Small ribosomal subunit protein eS4.